We begin with the raw amino-acid sequence, 151 residues long: uncharacterized protein (151 aa).

The interval 1-48 is disordered; sequence MRMAPTESTEGRRLWPGPREGGSGKETTSEKLSNLPRPHSYSPKRADA.

This is an uncharacterized protein from Homo sapiens (Human).